A 573-amino-acid chain; its full sequence is Arylsulfatase I (573 aa).

The signal sequence occupies residues 1–23 (MHALTGLSLVSLLSFGYLSWDWA). Ca(2+) contacts are provided by aspartate 56, aspartate 57, and cysteine 94. Cysteine 94 serves as the catalytic Nucleophile. Cysteine 94 is subject to 3-oxoalanine (Cys). Lysine 148 is a substrate binding site. The active site involves histidine 150. Histidine 240 is a binding site for substrate. N-linked (GlcNAc...) asparagine glycans are attached at residues asparagine 277 and asparagine 289. 2 residues coordinate Ca(2+): aspartate 298 and asparagine 299. Residue lysine 316 coordinates substrate. Asparagine 467 and asparagine 497 each carry an N-linked (GlcNAc...) asparagine glycan. The disordered stretch occupies residues 516–550 (FNGGAWGPWASDEEEEEEEEEAGRARSFSRGRRKK). The segment covering 526–536 (SDEEEEEEEEE) has biased composition (acidic residues).

This sequence belongs to the sulfatase family. Ca(2+) serves as cofactor. In terms of processing, the oxidation of Cys-94 residue to 3-oxoalanine (also known as C(alpha)-formylglycine) by SUMF1/Sulfatase-modifying factor 1, seems critical for catalytic activity.

It localises to the secreted. It is found in the endoplasmic reticulum. Displays arylsulfatase activity at neutral pH, when co-expressed with SUMF1; arylsulfatase activity is measured in the secretion medium of retinal cell line, but no activity is recorded when measured in cell extracts. In Canis lupus familiaris (Dog), this protein is Arylsulfatase I (ARSI).